Reading from the N-terminus, the 334-residue chain is E3 ubiquitin-protein ligase CIP8 (334 aa).

The disordered stretch occupies residues 111–158 (LNSRNEIDDDEDEDEDDGDEEEEDEEENLTVNDEEDEEDDLRRRNRFP). Over residues 117–149 (IDDDEDEDEDDGDEEEEDEEENLTVNDEEDEED) the composition is skewed to acidic residues. The segment at 257–298 (CAVCKDGMVMGETGKKLPCGHCYHGDCIVPWLGTRNSCPVCR) adopts an RING-type; atypical zinc-finger fold. Residues 307–334 (EYEEERKKRTSTVSDSAAASSSSSTSRY) form a disordered region. Residues 317 to 334 (STVSDSAAASSSSSTSRY) show a composition bias toward low complexity.

In terms of assembly, interacts with the RING finger of COP1. Interacts with UBC8 through its N-terminal region. In terms of tissue distribution, expressed in both light- and dark-grown seedlings.

The protein localises to the cytoplasm. The catalysed reaction is S-ubiquitinyl-[E2 ubiquitin-conjugating enzyme]-L-cysteine + [acceptor protein]-L-lysine = [E2 ubiquitin-conjugating enzyme]-L-cysteine + N(6)-ubiquitinyl-[acceptor protein]-L-lysine.. It functions in the pathway protein modification; protein ubiquitination. Its function is as follows. E3 ubiquitin-protein ligase that mediates ubiquitination and subsequent proteasomal degradation of target proteins. Probably forms a minimal ubiquitin ligase complex in cooperation with the E2 enzyme UBC8. Its interaction with COP1 suggests that it may participate in proteasome-mediated degradation of HY5 in vivo. The polypeptide is E3 ubiquitin-protein ligase CIP8 (CIP8) (Arabidopsis thaliana (Mouse-ear cress)).